Here is a 425-residue protein sequence, read N- to C-terminus: Adenosine 3'-phospho 5'-phosphosulfate transporter 1 (425 aa).

The next 9 membrane-spanning stretches (helical) occupy residues 27–47 (FLIL…IYYV), 102–122 (VIIL…AMGV), 147–167 (TQFL…MILA), 232–252 (YSWF…LFLL), 263–283 (ITYT…FDAF), 303–323 (MMFG…IEQG), 342–360 (VFLL…YSTI), 365–387 (PIVF…TIMY), and 391–411 (LTFL…VDIH).

This sequence belongs to the nucleotide-sugar transporter family. SLC35B subfamily.

Its subcellular location is the golgi apparatus membrane. In terms of biological role, mediates the transport of adenosine 3'-phospho 5'-phosphosulfate (PAPS), from cytosol into Golgi. PAPS is a universal sulfuryl donor for sulfation events that take place in the Golgi. The protein is Adenosine 3'-phospho 5'-phosphosulfate transporter 1 (pst-1) of Caenorhabditis elegans.